A 148-amino-acid polypeptide reads, in one-letter code: uncharacterized protein (148 aa).

Residues 1 to 18 form the signal peptide; it reads MKIILTVLAGVGLLSAGG. C19 carries the N-palmitoyl cysteine lipid modification. Residue C19 is the site of S-diacylglycerol cysteine attachment.

The protein resides in the cell membrane. This is an uncharacterized protein from Bacillus subtilis (strain 168).